Here is a 454-residue protein sequence, read N- to C-terminus: Growth/differentiation factor 9 (454 aa).

An N-terminal signal peptide occupies residues 1 to 24 (MARPNKFLLWFCCFAWLCFPISLG). The propeptide occupies 25 to 319 (SQASGGEAQI…GRSSHHRHRR (295 aa)). Residues Asn106, Asn163, Asn236, Asn255, and Asn268 are each glycosylated (N-linked (GlcNAc...) asparagine). The segment at 303-330 (GEEAAEDGRSSHHRHRRGQETVSSELKK) is disordered. The residue at position 325 (Ser325) is a Phosphoserine; by CK. Asn338 is a glycosylation site (N-linked (GlcNAc...) asparagine). Intrachain disulfides connect Cys353–Cys419, Cys382–Cys451, and Cys386–Cys453.

The protein belongs to the TGF-beta family. As to quaternary structure, homodimer or heterodimer (Potential). But, in contrast to other members of this family, cannot be disulfide-linked. Phosphorylated; phosphorylation is critical for GDF9 function. In vitro, can be phosphorylated by CK at Ser-325. Expressed in ovarian granulosa cells. Present in oocytes of primary follicles (at protein level).

It is found in the secreted. Required for ovarian folliculogenesis. Promotes primordial follicle development. Stimulates granulosa cell proliferation. Promotes cell transition from G0/G1 to S and G2/M phases, through an increase of CCND1 and CCNE1 expression, and RB1 phosphorylation. It regulates STAR expression and cAMP-dependent progesterone release in granulosa and thecal cells. Attenuates the suppressive effects of activin A on STAR expression and progesterone production by increasing the expression of inhibin B. It suppresses FST and FSTL3 production in granulosa-lutein cells. The sequence is that of Growth/differentiation factor 9 (GDF9) from Homo sapiens (Human).